Consider the following 152-residue polypeptide: Catabolic 3-dehydroquinase (152 aa).

Tyr-24 acts as the Proton acceptor in catalysis. Asn-75, His-81, and Asp-88 together coordinate substrate. His-101 (proton donor) is an active-site residue. Residues 102–103 (IS) and Arg-112 each bind substrate.

The protein belongs to the type-II 3-dehydroquinase family. As to quaternary structure, homododecamer. Adopts a ring-like structure, composed of an arrangement of two hexameric rings stacked on top of one another.

The catalysed reaction is 3-dehydroquinate = 3-dehydroshikimate + H2O. The protein operates within aromatic compound metabolism; 3,4-dihydroxybenzoate biosynthesis; 3,4-dihydroxybenzoate from 3-dehydroquinate: step 1/2. Its function is as follows. Is involved in the catabolism of quinate. Allows the utilization of quinate as carbon source via the beta-ketoadipate pathway. The chain is Catabolic 3-dehydroquinase from Phaeosphaeria nodorum (strain SN15 / ATCC MYA-4574 / FGSC 10173) (Glume blotch fungus).